The following is a 128-amino-acid chain: uncharacterized protein (128 aa).

A compositionally biased stretch (basic and acidic residues) spans 1 to 11 (MDNKKKEENPS). The tract at residues 1–40 (MDNKKKEENPSKSDTSISLPPSSTGEALQNYTESEWNASD) is disordered. A compositionally biased stretch (polar residues) spans 12–37 (KSDTSISLPPSSTGEALQNYTESEWN).

This is an uncharacterized protein from Caenorhabditis elegans.